We begin with the raw amino-acid sequence, 245 residues long: Adenosylcobinamide-GDP ribazoletransferase (245 aa).

The next 5 helical transmembrane spans lie at 35-55 (WFPLAGLVVGGACWLPFALGL), 108-128 (IGAFGVMGLLLGFGGQYIGAH), 137-157 (GVLIAAPIVGRGACVILAALV), 176-196 (IAIGVAATCGMLALLLTTPAI), and 197-217 (TTVTTIAICGAIVTALAHLAR).

The protein belongs to the CobS family. The cofactor is Mg(2+).

It is found in the cell inner membrane. The enzyme catalyses alpha-ribazole + adenosylcob(III)inamide-GDP = adenosylcob(III)alamin + GMP + H(+). It carries out the reaction alpha-ribazole 5'-phosphate + adenosylcob(III)inamide-GDP = adenosylcob(III)alamin 5'-phosphate + GMP + H(+). It functions in the pathway cofactor biosynthesis; adenosylcobalamin biosynthesis; adenosylcobalamin from cob(II)yrinate a,c-diamide: step 7/7. Functionally, joins adenosylcobinamide-GDP and alpha-ribazole to generate adenosylcobalamin (Ado-cobalamin). Also synthesizes adenosylcobalamin 5'-phosphate from adenosylcobinamide-GDP and alpha-ribazole 5'-phosphate. The protein is Adenosylcobinamide-GDP ribazoletransferase of Nitratidesulfovibrio vulgaris (strain ATCC 29579 / DSM 644 / CCUG 34227 / NCIMB 8303 / VKM B-1760 / Hildenborough) (Desulfovibrio vulgaris).